Here is a 37-residue protein sequence, read N- to C-terminus: Potassium channel toxin alpha-KTx 15.3 (37 aa).

A Pyrrolidone carboxylic acid modification is found at glutamine 1. 3 disulfides stabilise this stretch: cysteine 8/cysteine 28, cysteine 13/cysteine 33, and cysteine 17/cysteine 35.

In terms of tissue distribution, expressed by the venom gland.

It is found in the secreted. Inhibits A-type (Kv4) voltage-gated potassium channels of striated neurons (Ki=131 nM), probably by acting as a pore blocker. Has also been shown to block ERG1/Kv11.1/KCNH2 potassium channels (IC(50)=7.9 uM). The presence of the Kv4-associated proteins DPP6 or DPP10 is mandatory to have high-affinity blockade of Kv4.2/KCND2 and Kv4.3/KCND3 channels (80-90% inhibition at 500 nM of toxin). In contrast, the presence of the Kv4-associated protein KChIP1/KCNIP1 does not enhance the affinity blockade (only 40% inhibition at 500 nM). In adult rat brain, the toxin binds to sites in the striatum, and cerebellum. It shares the same target in rat brain than AaTX1 (AC Q867F4) and BmTX3 (AC Q8I0L5). In DPP6 knockout mice, A-type currents are about 20-fold less affected by the toxin. In rodent models of Parkinson's disease, the toxin reduces motor symptoms and emotional and cognitive symptoms. This chain is Potassium channel toxin alpha-KTx 15.3, found in Androctonus mauritanicus mauritanicus (Scorpion).